Consider the following 391-residue polypeptide: Serine protease 7 (391 aa).

The signal sequence occupies residues 1-27 (MKSTRKVVGIFLATCLLPFTVLQNVAA). Positions 28-136 (QGSCRNPNQK…KCGPHSFSNK (109 aa)) are cleaved as a propeptide — activation peptide. The Clip domain occupies 30–84 (SCRNPNQKQGQCLSIYDCQSLLSVIQQSYVSPEDRTFLRNSQCLDGVGRQPYVCC). Cystine bridges form between Cys-31-Cys-83, Cys-41-Cys-72, and Cys-47-Cys-84. Positions 91-121 (GSQEATSAAPPPTTTSSSSRGQDGQAGLGNL) are disordered. 5 disulfides stabilise this stretch: Cys-128-Cys-264, Cys-167-Cys-183, Cys-211-Cys-216, Cys-310-Cys-327, and Cys-337-Cys-366. Positions 137-390 (VYNGNDTAID…YMDWIVETIR (254 aa)) constitute a Peptidase S1 domain. A glycan (N-linked (GlcNAc...) asparagine) is linked at Asn-141. The Charge relay system role is filled by His-182. The Ca(2+) site is built by Glu-202, Asp-204, Lys-207, and Asp-210. Asp-244 (charge relay system) is an active-site residue. Catalysis depends on Ser-341, which acts as the Charge relay system.

This sequence belongs to the peptidase S1 family. CLIP subfamily. In terms of assembly, interacts with Spn27A.

The protein localises to the secreted. Its function is as follows. Serine protease that, by cleaving and activating prophenoloxidase (PPO1) after immune challenge, plays an essential role in the melanization immune response to septic wounding. May function in diverse Hayan-dependent PPO1-activating cascades that are negatively controlled by different serpin proteins; Spn27A in the hemolymph and Spn77BA in the trachea. Important for the innate immune response to fungi. Regulation of melanization and PPO1 activation appears to be largely independent of the Toll signaling pathway. The sequence is that of Serine protease 7 from Drosophila melanogaster (Fruit fly).